Here is a 154-residue protein sequence, read N- to C-terminus: 6,7-dimethyl-8-ribityllumazine synthase (154 aa).

Residues Phe22, 56-58 (SFE), and 81-83 (VLI) each bind 5-amino-6-(D-ribitylamino)uracil. Residue 86 to 87 (ET) participates in (2S)-2-hydroxy-3-oxobutyl phosphate binding. Catalysis depends on His89, which acts as the Proton donor. A 5-amino-6-(D-ribitylamino)uracil-binding site is contributed by Phe114. A (2S)-2-hydroxy-3-oxobutyl phosphate-binding site is contributed by Arg128.

Belongs to the DMRL synthase family.

It catalyses the reaction (2S)-2-hydroxy-3-oxobutyl phosphate + 5-amino-6-(D-ribitylamino)uracil = 6,7-dimethyl-8-(1-D-ribityl)lumazine + phosphate + 2 H2O + H(+). Its pathway is cofactor biosynthesis; riboflavin biosynthesis; riboflavin from 2-hydroxy-3-oxobutyl phosphate and 5-amino-6-(D-ribitylamino)uracil: step 1/2. Functionally, catalyzes the formation of 6,7-dimethyl-8-ribityllumazine by condensation of 5-amino-6-(D-ribitylamino)uracil with 3,4-dihydroxy-2-butanone 4-phosphate. This is the penultimate step in the biosynthesis of riboflavin. The polypeptide is 6,7-dimethyl-8-ribityllumazine synthase (Chlamydia felis (strain Fe/C-56) (Chlamydophila felis)).